We begin with the raw amino-acid sequence, 163 residues long: Large ribosomal subunit protein uL18 (163 aa).

The protein belongs to the universal ribosomal protein uL18 family. As to quaternary structure, part of the 50S ribosomal subunit. Contacts the 5S and 23S rRNAs.

This is one of the proteins that bind and probably mediate the attachment of the 5S RNA into the large ribosomal subunit, where it forms part of the central protuberance. The polypeptide is Large ribosomal subunit protein uL18 (Thermoplasma acidophilum (strain ATCC 25905 / DSM 1728 / JCM 9062 / NBRC 15155 / AMRC-C165)).